We begin with the raw amino-acid sequence, 60 residues long: MDPCDCSKTGKCNCGGSCTCTNCSCTSCKKSCCACCPSGCTKCASGCVCKGKTCDTTCCQ.

The segment at 1 to 28 is beta; it reads MDPCDCSKTGKCNCGGSCTCTNCSCTSC. A divalent metal cation is bound by residues Cys-4, Cys-6, Cys-12, Cys-14, Cys-18, Cys-20, Cys-23, Cys-25, Cys-28, Cys-32, Cys-33, Cys-35, Cys-36, Cys-40, Cys-43, Cys-47, Cys-49, Cys-54, Cys-58, and Cys-59. The interval 29 to 60 is alpha; the sequence is KKSCCACCPSGCTKCASGCVCKGKTCDTTCCQ.

This sequence belongs to the metallothionein superfamily. Type 1 family.

Its function is as follows. Metallothioneins have a high content of cysteine residues that bind various heavy metals. In Oryzias latipes (Japanese rice fish), this protein is Metallothionein (mt).